The chain runs to 375 residues: 23S rRNA (uracil(747)-C(5))-methyltransferase RlmC (375 aa).

Positions 3, 11, 14, and 87 each coordinate [4Fe-4S] cluster. S-adenosyl-L-methionine-binding residues include Gln-212, Phe-241, Glu-262, and Asn-307. Cys-334 serves as the catalytic Nucleophile.

The protein belongs to the class I-like SAM-binding methyltransferase superfamily. RNA M5U methyltransferase family. RlmC subfamily.

It carries out the reaction uridine(747) in 23S rRNA + S-adenosyl-L-methionine = 5-methyluridine(747) in 23S rRNA + S-adenosyl-L-homocysteine + H(+). In terms of biological role, catalyzes the formation of 5-methyl-uridine at position 747 (m5U747) in 23S rRNA. This is 23S rRNA (uracil(747)-C(5))-methyltransferase RlmC from Salmonella agona (strain SL483).